We begin with the raw amino-acid sequence, 563 residues long: MDIEETIYKYALTNAIEHGNKCQVGSVIGMVMSKNPEMRKDPKTVSQLAGKLVAKVNNLTPEEQQKEVESLGGLEQHTKKEEKPKGLPELKNTEDKKVTLRFAPNPSGPLHIGHARAAILNKLYQEKYNGKLILRIEDTDPKRVEPDAYDAIPQDIKWLGIEPDEIYTQSDRLEIYYEYAQKAIEIGAAYMCKCDGGEFKKLKDNCQPCPCRSHTIEENMELWNNFENMEEGEAVLRIKTDINHKNPAIRDWVAMRIVNQEHPRLGNKYKIYPMMNFSVTVDDHLMGMTHVLRGKDHLANSEKQTYLYKHFGWDVPEFIHYGRLKMDDVELSTSKAREGIENKTYTGWDDPRLGTIRAIARRGIKKEVLYDLIEEIGTKQADATISWKKIYGLNRNIIEENTNRYFFIPNAVKVDVENLPSSKTNMTVERELHYNKPEKGFRNLTFNGSVYIPEDDYKHAQDKNIPLRLMDLINIKIEEDKVIYDSETLEDAQAQHARIIQWAPVETSISATVVMPDNTHVTGYIECDASNLEVDDMVQLERFGFARVDKINDNEITFYYTHN.

The tract at residues P61–E94 is disordered. The span at Q76–E94 shows a compositional bias: basic and acidic residues. A 'HIGH' region motif is present at residues P104–H114.

The protein belongs to the class-I aminoacyl-tRNA synthetase family. Glutamate--tRNA ligase type 2 subfamily.

It is found in the cytoplasm. It catalyses the reaction tRNA(Glu) + L-glutamate + ATP = L-glutamyl-tRNA(Glu) + AMP + diphosphate. Functionally, catalyzes the attachment of glutamate to tRNA(Glu) in a two-step reaction: glutamate is first activated by ATP to form Glu-AMP and then transferred to the acceptor end of tRNA(Glu). In Methanosphaera stadtmanae (strain ATCC 43021 / DSM 3091 / JCM 11832 / MCB-3), this protein is Glutamate--tRNA ligase.